The chain runs to 473 residues: Putative malate dehydrogenase 1B (473 aa).

It belongs to the LDH/MDH superfamily. MDH type 2 family.

The chain is Putative malate dehydrogenase 1B (MDH1B) from Bos taurus (Bovine).